Here is an 86-residue protein sequence, read N- to C-terminus: Protein Vpu (86 aa).

Residues 1 to 12 (MLELIGRIDYRL) are Extracellular-facing. The helical transmembrane segment at 13–33 (GVGALIVALIIVIIVWTIAYI) threads the bilayer. Residues 34–86 (EYRKLVRQRRIDWLVKRIKERAEDSGNESGGDTEELETMVDMGHLRLLDGNDL) lie on the Cytoplasmic side of the membrane. 2 positions are modified to phosphoserine; by host CK2: serine 58 and serine 62.

Belongs to the HIV-1 VPU protein family. Homopentamer. Interacts with host CD4 and BRTC; these interactions induce proteasomal degradation of CD4. Interacts with host BST2; this interaction leads to the degradation of host BST2. Interacts with host FBXW11. Interacts with host AP1M1; this interaction plays a role in the mistrafficking and subsequent degradation of host BST2. Interacts with host RANBP2; this interaction allows Vpu to down-regulate host BLM sumoylation. In terms of processing, phosphorylated by host CK2. This phosphorylation is necessary for interaction with human BTRC and degradation of CD4.

The protein resides in the host membrane. With respect to regulation, ion channel activity is inhibited by hexamethylene amiloride in vitro. Its function is as follows. Enhances virion budding, by targeting human CD4 and Tetherin/BST2 to proteasome degradation. Degradation of CD4 prevents any unwanted premature interactions between viral Env and its host receptor CD4 in the endoplasmic reticulum. Degradation of antiretroviral protein Tetherin/BST2 is important for virion budding, as BST2 tethers new viral particles to the host cell membrane. Mechanistically, Vpu bridges either CD4 or BST2 to BTRC, a substrate recognition subunit of the Skp1/Cullin/F-box protein E3 ubiquitin ligase, induces their ubiquitination and subsequent proteasomal degradation. The alteration of the E3 ligase specificity by Vpu seems to promote the degradation of host IKBKB, leading to NF-kappa-B down-regulation and subsequent apoptosis. Acts as a viroporin that forms an oligomeric ion channel in membranes. Modulates the host DNA repair mechanisms to promote degradation of nuclear viral cDNA in cells that are already productively infected in order to suppress immune sensing and proviral hyper-integration (superinfection). Manipulates PML-NBs and modulates SUMOylation of host BLM protein thereby enhancing its DNA-end processing activity toward viral unintegrated linear DNA. Also inhibits RAD52-mediated homologous repair of viral cDNA, preventing the generation of dead-end circular forms of single copies of the long terminal repeat and permitting sustained nucleolytic attack. This Homo sapiens (Human) protein is Protein Vpu.